The sequence spans 495 residues: Dihydrolipoyl dehydrogenase, mitochondrial (495 aa).

FAD-binding positions include 59–68 (EKNATLGGTC), Lys77, and 169–171 (SGS). Cys68 and Cys73 are oxidised to a cystine. Residues 206 to 213 (GAGVIGLE), Glu229, Val264, and Gly299 contribute to the NAD(+) site. FAD contacts are provided by residues Asp340 and 346–349 (MLAH). His472 functions as the Proton acceptor in the catalytic mechanism.

This sequence belongs to the class-I pyridine nucleotide-disulfide oxidoreductase family. It depends on FAD as a cofactor.

It is found in the mitochondrion matrix. The catalysed reaction is N(6)-[(R)-dihydrolipoyl]-L-lysyl-[protein] + NAD(+) = N(6)-[(R)-lipoyl]-L-lysyl-[protein] + NADH + H(+). In Caenorhabditis elegans, this protein is Dihydrolipoyl dehydrogenase, mitochondrial (dld-1).